Consider the following 145-residue polypeptide: Ribonuclease P protein component (145 aa).

Positions 121–145 (PAAAGTMPPARTVHPSSLSPTEPEL) are disordered. Residues 134-145 (HPSSLSPTEPEL) show a composition bias toward polar residues.

This sequence belongs to the RnpA family. In terms of assembly, consists of a catalytic RNA component (M1 or rnpB) and a protein subunit.

The catalysed reaction is Endonucleolytic cleavage of RNA, removing 5'-extranucleotides from tRNA precursor.. RNaseP catalyzes the removal of the 5'-leader sequence from pre-tRNA to produce the mature 5'-terminus. It can also cleave other RNA substrates such as 4.5S RNA. The protein component plays an auxiliary but essential role in vivo by binding to the 5'-leader sequence and broadening the substrate specificity of the ribozyme. In Xanthomonas axonopodis pv. citri (strain 306), this protein is Ribonuclease P protein component.